Reading from the N-terminus, the 493-residue chain is Glycerol kinase (493 aa).

T11 is a binding site for ADP. ATP-binding residues include T11, T12, and S13. Residue T11 coordinates sn-glycerol 3-phosphate. R15 is a binding site for ADP. Positions 80, 81, 132, and 241 each coordinate sn-glycerol 3-phosphate. Residues R80, E81, Y132, D241, and Q242 each contribute to the glycerol site. Residues T263 and G306 each coordinate ADP. Positions 263, 306, 310, and 408 each coordinate ATP. G408 contacts ADP.

The protein belongs to the FGGY kinase family.

The enzyme catalyses glycerol + ATP = sn-glycerol 3-phosphate + ADP + H(+). It participates in polyol metabolism; glycerol degradation via glycerol kinase pathway; sn-glycerol 3-phosphate from glycerol: step 1/1. With respect to regulation, inhibited by fructose 1,6-bisphosphate (FBP). Key enzyme in the regulation of glycerol uptake and metabolism. Catalyzes the phosphorylation of glycerol to yield sn-glycerol 3-phosphate. The polypeptide is Glycerol kinase (Cereibacter sphaeroides (strain ATCC 17025 / ATH 2.4.3) (Rhodobacter sphaeroides)).